An 857-amino-acid polypeptide reads, in one-letter code: DNA mismatch repair protein MutS (857 aa).

Residue 608–615 participates in ATP binding; the sequence is GPNMSGKS.

Belongs to the DNA mismatch repair MutS family.

In terms of biological role, this protein is involved in the repair of mismatches in DNA. It is possible that it carries out the mismatch recognition step. This protein has a weak ATPase activity. In Lacticaseibacillus paracasei (strain ATCC 334 / BCRC 17002 / CCUG 31169 / CIP 107868 / KCTC 3260 / NRRL B-441) (Lactobacillus paracasei), this protein is DNA mismatch repair protein MutS.